Reading from the N-terminus, the 477-residue chain is Bifunctional protein HldE (477 aa).

The segment at 1-321 is ribokinase; the sequence is MKILKSFTPR…EYEASLHKST (321 aa). ATP is bound at residue 198–201; it reads NKKE. The active site involves D266. Residues 348 to 477 form a cytidylyltransferase region; it reads FTNGCFDILH…IQKIKGDLHV (130 aa).

This sequence in the N-terminal section; belongs to the carbohydrate kinase PfkB family. In the C-terminal section; belongs to the cytidylyltransferase family. As to quaternary structure, homodimer.

The enzyme catalyses D-glycero-beta-D-manno-heptose 7-phosphate + ATP = D-glycero-beta-D-manno-heptose 1,7-bisphosphate + ADP + H(+). It carries out the reaction D-glycero-beta-D-manno-heptose 1-phosphate + ATP + H(+) = ADP-D-glycero-beta-D-manno-heptose + diphosphate. It functions in the pathway nucleotide-sugar biosynthesis; ADP-L-glycero-beta-D-manno-heptose biosynthesis; ADP-L-glycero-beta-D-manno-heptose from D-glycero-beta-D-manno-heptose 7-phosphate: step 1/4. It participates in nucleotide-sugar biosynthesis; ADP-L-glycero-beta-D-manno-heptose biosynthesis; ADP-L-glycero-beta-D-manno-heptose from D-glycero-beta-D-manno-heptose 7-phosphate: step 3/4. Catalyzes the phosphorylation of D-glycero-D-manno-heptose 7-phosphate at the C-1 position to selectively form D-glycero-beta-D-manno-heptose-1,7-bisphosphate. Its function is as follows. Catalyzes the ADP transfer from ATP to D-glycero-beta-D-manno-heptose 1-phosphate, yielding ADP-D-glycero-beta-D-manno-heptose. In Sulfurimonas denitrificans (strain ATCC 33889 / DSM 1251) (Thiomicrospira denitrificans (strain ATCC 33889 / DSM 1251)), this protein is Bifunctional protein HldE.